We begin with the raw amino-acid sequence, 180 residues long: Large ribosomal subunit protein uL5 (180 aa).

It belongs to the universal ribosomal protein uL5 family. Part of the 50S ribosomal subunit; part of the 5S rRNA/L5/L18/L25 subcomplex. Contacts the 5S rRNA and the P site tRNA. Forms a bridge to the 30S subunit in the 70S ribosome.

This is one of the proteins that bind and probably mediate the attachment of the 5S RNA into the large ribosomal subunit, where it forms part of the central protuberance. In the 70S ribosome it contacts protein S13 of the 30S subunit (bridge B1b), connecting the 2 subunits; this bridge is implicated in subunit movement. Contacts the P site tRNA; the 5S rRNA and some of its associated proteins might help stabilize positioning of ribosome-bound tRNAs. This Xanthomonas oryzae pv. oryzae (strain MAFF 311018) protein is Large ribosomal subunit protein uL5.